The sequence spans 156 residues: Endoribonuclease YbeY (156 aa).

His105, His109, and Asp115 together coordinate Zn(2+).

This sequence belongs to the endoribonuclease YbeY family. The cofactor is Zn(2+).

The protein resides in the cytoplasm. Its function is as follows. Single strand-specific metallo-endoribonuclease involved in late-stage 70S ribosome quality control and in maturation of the 3' terminus of the 16S rRNA. This Chlorobium chlorochromatii (strain CaD3) protein is Endoribonuclease YbeY.